Reading from the N-terminus, the 214-residue chain is Orotidine 5'-phosphate decarboxylase (214 aa).

Residues Asp-11, Lys-33, 59–68, Ser-114, 164–174, Gly-187, and Arg-188 each bind substrate; these read DFKIADIPNT and PGIGSQGGRAS. The Proton donor role is filled by Lys-61.

Belongs to the OMP decarboxylase family. Type 1 subfamily. Homodimer.

It carries out the reaction orotidine 5'-phosphate + H(+) = UMP + CO2. It functions in the pathway pyrimidine metabolism; UMP biosynthesis via de novo pathway; UMP from orotate: step 2/2. Catalyzes the decarboxylation of orotidine 5'-monophosphate (OMP) to uridine 5'-monophosphate (UMP). This chain is Orotidine 5'-phosphate decarboxylase, found in Thermoplasma acidophilum (strain ATCC 25905 / DSM 1728 / JCM 9062 / NBRC 15155 / AMRC-C165).